Here is a 259-residue protein sequence, read N- to C-terminus: 12alpha-hydroxysteroid dehydrogenase (259 aa).

Residue Tyr-162 is the Proton acceptor of the active site.

Belongs to the short-chain dehydrogenases/reductases (SDR) family. Homotetramer.

The enzyme catalyses cholate + NADP(+) = 3alpha,7alpha-dihydroxy-12-oxo-5beta-cholanate + NADPH + H(+). It carries out the reaction deoxycholate + NADP(+) = 12-dehydrodeoxycholate + NADPH + H(+). In terms of biological role, catalyzes the oxidation of the 12alpha-hydroxy group of bile acids, like cholate and deoxycholate. Is also able to catalyze the reverse reaction in vitro. Is likely involved in an epimerization pathway of bile acids that converts hydroxy groups from alpha to beta positions via stable oxo-intermediates, which occurs in the human gut. The polypeptide is 12alpha-hydroxysteroid dehydrogenase (Clostridium sp. (strain ATCC 29733 / VPI C48-50)).